A 507-amino-acid polypeptide reads, in one-letter code: Fatty acid resistance protein FarB (507 aa).

Transmembrane regions (helical) follow at residues 8–28 (GAAL…EVLD), 52–72 (WVIT…GFLA), 78–98 (VKLF…CGIA), 109–129 (ILQG…LMAS), 136–156 (MLAL…GPIL), 164–184 (WHWG…AWIT), 199–219 (PTDY…QMML), 233–253 (IITL…WELG), 274–294 (IATS…PLVL), 303–323 (AWAG…SPLI), 334–354 (LLVT…TDFY), 363–383 (IWPQ…LTTI), 399–419 (LSNF…STLW), and 478–498 (IFLA…LAKP).

The protein belongs to the major facilitator superfamily. EmrB family. As to quaternary structure, probably part of a tripartite efflux system FarAB-MtrE, which is composed of an inner membrane transporter, FarB, a periplasmic membrane fusion protein, FarA, and an outer membrane component, MtrE.

Its subcellular location is the cell inner membrane. In terms of biological role, mediates resistance to long-chained antibacterial fatty acids (FAs). Function is dependent on the MtrE outer membrane protein. The sequence is that of Fatty acid resistance protein FarB from Neisseria gonorrhoeae.